Consider the following 408-residue polypeptide: MWAFPELPLPLLVNLFGSLLGFVATVTLIPAFRSHFIAARLCGQDLNKLSRQQIPESQGVICGAVFLIILFCFIPFPFLNCFVEEQCKAFPHHEFVALIGALLAICCMIFLGFADDVLNLPWRHKLLLPTAASLPLLMVYFTNFGNTTIVVPKPFRWILGLHLDLGILYYVYMGLLAVFCTNAINILAGINGLEAGQSLVISASIIVFNLVELEGDYRDDHVFSLYFMIPFFFTTLGLLYHNWYPSQVFVGDTFCYFAGMTFAVVGILGHFSKTMLLFFIPQVFNFLYSLPQLLHAIPCPRHRIPRLNPKTGKLEMSYSKFKTKNLSFLGTFILKVAERLQLVTVHRGESEDGAFTECNNMTLINLLLKIFGPIHERNLTLLLLLLQILSSAVTFSIRYQLVRLFYDV.

Over 1–10 (MWAFPELPLP) the chain is Lumenal. A helical transmembrane segment spans residues 11 to 38 (LLVNLFGSLLGFVATVTLIPAFRSHFIA). Residues 39–58 (ARLCGQDLNKLSRQQIPESQ) are Cytoplasmic-facing. UDP-N-acetyl-alpha-D-glucosamine is bound by residues 44–46 (QDL) and E56. The helical transmembrane segment at 59–78 (GVICGAVFLIILFCFIPFPF) threads the bilayer. The Lumenal portion of the chain corresponds to 79–91 (LNCFVEEQCKAFP). Residues 92-118 (HHEFVALIGALLAICCMIFLGFADDVL) traverse the membrane as a helical segment. Residues 119–121 (NLP) are Cytoplasmic-facing. Residues 122-143 (WRHKLLLPTAASLPLLMVYFTN) traverse the membrane as a helical segment. K125 serves as a coordination point for dolichyl phosphate. The Lumenal segment spans residues 144–166 (FGNTTIVVPKPFRWILGLHLDLG). N146 carries N-linked (GlcNAc...) asparagine glycosylation. Residues 167–186 (ILYYVYMGLLAVFCTNAINI) traverse the membrane as a helical segment. 178–186 (VFCTNAINI) contacts dolichyl phosphate. N185 contacts Mg(2+). Residues 187 to 192 (LAGING) are Cytoplasmic-facing. N191 provides a ligand contact to UDP-N-acetyl-alpha-D-glucosamine. The chain crosses the membrane as a helical span at residues 193–213 (LEAGQSLVISASIIVFNLVEL). Residues 214 to 218 (EGDYR) lie on the Lumenal side of the membrane. The chain crosses the membrane as a helical span at residues 219–242 (DDHVFSLYFMIPFFFTTLGLLYHN). Topologically, residues 243–250 (WYPSQVFV) are cytoplasmic. Residues 251-269 (GDTFCYFAGMTFAVVGILG) traverse the membrane as a helical segment. D252 is a binding site for Mg(2+). The Lumenal segment spans residues 270 to 271 (HF). Residues 272 to 293 (SKTMLLFFIPQVFNFLYSLPQL) traverse the membrane as a helical segment. The Cytoplasmic portion of the chain corresponds to 294-375 (LHAIPCPRHR…LLLKIFGPIH (82 aa)). 301 to 303 (RHR) contributes to the UDP-N-acetyl-alpha-D-glucosamine binding site. The helical transmembrane segment at 376–400 (ERNLTLLLLLLQILSSAVTFSIRYQ) threads the bilayer. The Lumenal segment spans residues 401–408 (LVRLFYDV).

It belongs to the glycosyltransferase 4 family. As to quaternary structure, homodimer. It depends on Mg(2+) as a cofactor.

Its subcellular location is the endoplasmic reticulum membrane. It catalyses the reaction a di-trans,poly-cis-dolichyl phosphate + UDP-N-acetyl-alpha-D-glucosamine = an N-acetyl-alpha-D-glucosaminyl-diphospho-di-trans,poly-cis-dolichol + UMP. It participates in protein modification; protein glycosylation. With respect to regulation, inhibited by natural nucleoside antibiotic tunicamycin, which acts as a structural analog and competitor of UDP-GlcNAc. Its function is as follows. UDP-N-acetylglucosamine--dolichyl-phosphate N-acetylglucosaminephosphotransferase that operates in the biosynthetic pathway of dolichol-linked oligosaccharides, the glycan precursors employed in protein asparagine (N)-glycosylation. The assembly of dolichol-linked oligosaccharides begins on the cytosolic side of the endoplasmic reticulum membrane and finishes in its lumen. The sequential addition of sugars to dolichol pyrophosphate produces dolichol-linked oligosaccharides containing fourteen sugars, including two GlcNAcs, nine mannoses and three glucoses. Once assembled, the oligosaccharide is transferred from the lipid to nascent proteins by oligosaccharyltransferases. Catalyzes the initial step of dolichol-linked oligosaccharide biosynthesis, transfering GlcNAc-1-P from cytosolic UDP-GlcNAc onto the carrier lipid dolichyl phosphate (P-dolichol), yielding GlcNAc-P-P-dolichol embedded in the cytoplasmic leaflet of the endoplasmic reticulum membrane. This Cricetulus longicaudatus (Long-tailed dwarf hamster) protein is UDP-N-acetylglucosamine--dolichyl-phosphate N-acetylglucosaminephosphotransferase (DPAGT1).